The primary structure comprises 337 residues: Holliday junction branch migration complex subunit RuvB (337 aa).

The segment at 4 to 186 (ADRLIAADNP…FGIVQRLEYY (183 aa)) is large ATPase domain (RuvB-L). ATP-binding positions include isoleucine 25, arginine 26, glycine 67, lysine 70, threonine 71, threonine 72, 133–135 (EDY), arginine 176, tyrosine 186, and arginine 223. Residue threonine 71 participates in Mg(2+) binding. The interval 187 to 257 (KVDDLQYIVQ…IADKALNMLD (71 aa)) is small ATPAse domain (RuvB-S). A head domain (RuvB-H) region spans residues 260-337 (VCGFDYMDRK…LHFGIDRPDK (78 aa)). Residues arginine 315 and arginine 320 each coordinate DNA.

Belongs to the RuvB family. Homohexamer. Forms an RuvA(8)-RuvB(12)-Holliday junction (HJ) complex. HJ DNA is sandwiched between 2 RuvA tetramers; dsDNA enters through RuvA and exits via RuvB. An RuvB hexamer assembles on each DNA strand where it exits the tetramer. Each RuvB hexamer is contacted by two RuvA subunits (via domain III) on 2 adjacent RuvB subunits; this complex drives branch migration. In the full resolvosome a probable DNA-RuvA(4)-RuvB(12)-RuvC(2) complex forms which resolves the HJ.

Its subcellular location is the cytoplasm. It carries out the reaction ATP + H2O = ADP + phosphate + H(+). Functionally, the RuvA-RuvB-RuvC complex processes Holliday junction (HJ) DNA during genetic recombination and DNA repair, while the RuvA-RuvB complex plays an important role in the rescue of blocked DNA replication forks via replication fork reversal (RFR). RuvA specifically binds to HJ cruciform DNA, conferring on it an open structure. The RuvB hexamer acts as an ATP-dependent pump, pulling dsDNA into and through the RuvAB complex. RuvB forms 2 homohexamers on either side of HJ DNA bound by 1 or 2 RuvA tetramers; 4 subunits per hexamer contact DNA at a time. Coordinated motions by a converter formed by DNA-disengaged RuvB subunits stimulates ATP hydrolysis and nucleotide exchange. Immobilization of the converter enables RuvB to convert the ATP-contained energy into a lever motion, pulling 2 nucleotides of DNA out of the RuvA tetramer per ATP hydrolyzed, thus driving DNA branch migration. The RuvB motors rotate together with the DNA substrate, which together with the progressing nucleotide cycle form the mechanistic basis for DNA recombination by continuous HJ branch migration. Branch migration allows RuvC to scan DNA until it finds its consensus sequence, where it cleaves and resolves cruciform DNA. The protein is Holliday junction branch migration complex subunit RuvB of Aliivibrio salmonicida (strain LFI1238) (Vibrio salmonicida (strain LFI1238)).